Here is a 314-residue protein sequence, read N- to C-terminus: 4-hydroxy-3-methylbut-2-enyl diphosphate reductase (314 aa).

[4Fe-4S] cluster is bound at residue Cys-12. His-43 and His-81 together coordinate (2E)-4-hydroxy-3-methylbut-2-enyl diphosphate. 2 residues coordinate dimethylallyl diphosphate: His-43 and His-81. His-43 and His-81 together coordinate isopentenyl diphosphate. Cys-103 is a binding site for [4Fe-4S] cluster. A (2E)-4-hydroxy-3-methylbut-2-enyl diphosphate-binding site is contributed by His-131. His-131 contacts dimethylallyl diphosphate. Residue His-131 coordinates isopentenyl diphosphate. Residue Glu-133 is the Proton donor of the active site. A (2E)-4-hydroxy-3-methylbut-2-enyl diphosphate-binding site is contributed by Thr-170. Cys-198 serves as a coordination point for [4Fe-4S] cluster. Residues Ser-226, Asn-228, and Ser-271 each contribute to the (2E)-4-hydroxy-3-methylbut-2-enyl diphosphate site. Residues Ser-226, Asn-228, and Ser-271 each coordinate dimethylallyl diphosphate. Positions 226, 228, and 271 each coordinate isopentenyl diphosphate.

It belongs to the IspH family. [4Fe-4S] cluster is required as a cofactor.

The catalysed reaction is isopentenyl diphosphate + 2 oxidized [2Fe-2S]-[ferredoxin] + H2O = (2E)-4-hydroxy-3-methylbut-2-enyl diphosphate + 2 reduced [2Fe-2S]-[ferredoxin] + 2 H(+). It catalyses the reaction dimethylallyl diphosphate + 2 oxidized [2Fe-2S]-[ferredoxin] + H2O = (2E)-4-hydroxy-3-methylbut-2-enyl diphosphate + 2 reduced [2Fe-2S]-[ferredoxin] + 2 H(+). It participates in isoprenoid biosynthesis; dimethylallyl diphosphate biosynthesis; dimethylallyl diphosphate from (2E)-4-hydroxy-3-methylbutenyl diphosphate: step 1/1. The protein operates within isoprenoid biosynthesis; isopentenyl diphosphate biosynthesis via DXP pathway; isopentenyl diphosphate from 1-deoxy-D-xylulose 5-phosphate: step 6/6. Functionally, catalyzes the conversion of 1-hydroxy-2-methyl-2-(E)-butenyl 4-diphosphate (HMBPP) into a mixture of isopentenyl diphosphate (IPP) and dimethylallyl diphosphate (DMAPP). Acts in the terminal step of the DOXP/MEP pathway for isoprenoid precursor biosynthesis. The polypeptide is 4-hydroxy-3-methylbut-2-enyl diphosphate reductase (Halalkalibacterium halodurans (strain ATCC BAA-125 / DSM 18197 / FERM 7344 / JCM 9153 / C-125) (Bacillus halodurans)).